The sequence spans 247 residues: Fibroblast growth factor 14 (247 aa).

2 disordered regions span residues 1-38 (MAAAIASGLIRQKRQAREQHWDRPSASRRRSSPSKNRG) and 214-247 (VGETVPKPGVTPSKSTSASAIMNGGKPVNKSKTT). Residues 15 to 25 (QAREQHWDRPS) are compositionally biased toward basic and acidic residues.

This sequence belongs to the heparin-binding growth factors family. In terms of assembly, interacts with SCN8A. In terms of tissue distribution, nervous system.

It localises to the nucleus. In terms of biological role, probably involved in nervous system development and function. The polypeptide is Fibroblast growth factor 14 (FGF14) (Homo sapiens (Human)).